Reading from the N-terminus, the 377-residue chain is MTDSPVLALAKELISRQSVTPADAGCQDLMIERLKALGFEIESMVFEDTTNFWARRGTQSPLFVFAGHTDVVPAGPLSQWHTPPFEPTVIDGFLHGRGAADMKGSLACMIVAVERFIAEHPDHQGSIGFLITSDEEGPFINGTVRVVETLMARNELIDMCIVGEPSSTLAVGDVVKNGRRGSITGDLKVKGTQGHVAYPHLANNPVHKALPALAELAATQWDEGNAYFPPTSFQIPNLQAGTGASNVIPGEFDVQFNFRFSTELTDEEIKRRVHSVLDAHGLDYGVKWTLSGQPFLTDTGELLAAVVAAVEEVNHQAPALLTTGGTSDGRFIAQMGAQVVELGPVNATIHKVNECVRIADLEKLTDMYQKTLNHLLG.

Residue His68 coordinates Zn(2+). Asp70 is an active-site residue. Asp101 contacts Zn(2+). Glu135 (proton acceptor) is an active-site residue. Residues Glu136, Glu164, and His350 each coordinate Zn(2+).

This sequence belongs to the peptidase M20A family. DapE subfamily. In terms of assembly, homodimer. Requires Zn(2+) as cofactor. Co(2+) serves as cofactor.

The enzyme catalyses N-succinyl-(2S,6S)-2,6-diaminopimelate + H2O = (2S,6S)-2,6-diaminopimelate + succinate. Its pathway is amino-acid biosynthesis; L-lysine biosynthesis via DAP pathway; LL-2,6-diaminopimelate from (S)-tetrahydrodipicolinate (succinylase route): step 3/3. In terms of biological role, catalyzes the hydrolysis of N-succinyl-L,L-diaminopimelic acid (SDAP), forming succinate and LL-2,6-diaminopimelate (DAP), an intermediate involved in the bacterial biosynthesis of lysine and meso-diaminopimelic acid, an essential component of bacterial cell walls. This chain is Succinyl-diaminopimelate desuccinylase, found in Vibrio cholerae serotype O1 (strain ATCC 39541 / Classical Ogawa 395 / O395).